A 500-amino-acid polypeptide reads, in one-letter code: Protein shisa-6 (500 aa).

The signal sequence occupies residues 1-25 (MALRRLLLLLLLSLESLDLLPSVHG). Residues 26 to 174 (ARGRAANRTL…NKYDPEKDKT (149 aa)) lie on the Extracellular side of the membrane. N-linked (GlcNAc...) asparagine glycosylation is found at Asn-32 and Asn-59. A disordered region spans residues 52 to 73 (ARGGRELNGTARAPGIPEAGSR). The helical transmembrane segment at 175 to 195 (NFTVYITCGVIAFVIVAGVFA) threads the bilayer. Topologically, residues 196-500 (KVSYDKAHRP…YTASKTEVTV (305 aa)) are cytoplasmic. The segment covering 240–255 (TSPKENTPVRSSSKNH) has biased composition (polar residues). Disordered regions lie at residues 240–269 (TSPK…PEKP) and 349–378 (SQQK…DRGL). 3 positions are modified to phosphoserine: Ser-391, Ser-397, and Ser-409. A Phosphothreonine modification is found at Thr-433. The segment at 444 to 470 (MHSHPSASNNSYATLGQSQTAAKRHAF) is disordered. The span at 448 to 464 (PSASNNSYATLGQSQTA) shows a compositional bias: polar residues. Position 477 is a phosphothreonine (Thr-477). The short motif at 497–500 (EVTV) is the PDZ-binding element.

This sequence belongs to the shisa family. Component of the postsynaptic hippocampal AMPA-type glutamate receptor (AMPAR) complex, at least composed of pore forming AMPAR subunits GRIA1, GRIA2 and GRIA3 and AMPAR auxiliary proteins SHISA6 and SHISA7. Interacts (via PDZ-binding motif) with DLG4/PSD-95 (via PDZ domain); the interaction is direct. Expressed in the developing ventral mesencephalon.

The protein resides in the membrane. Its subcellular location is the postsynaptic density. Involved in maintenance of high-frequency synaptic transmission at hippocampal CA3-CA1 synapses. Regulates AMPA-type glutamate receptor (AMPAR) immobilization at postsynaptic density keeping the channels in an activated state in the presence of glutamate and preventing synaptic depression. May play a role in self-renewal and differentiation of spermatogonial stem cells by inhibiting canonical Wnt signaling pathway. The protein is Protein shisa-6 of Homo sapiens (Human).